Reading from the N-terminus, the 280-residue chain is Putative pyruvate, phosphate dikinase regulatory protein (280 aa).

158–165 (GVSRTSKT) is an ADP binding site.

It belongs to the pyruvate, phosphate/water dikinase regulatory protein family. PDRP subfamily.

The catalysed reaction is N(tele)-phospho-L-histidyl/L-threonyl-[pyruvate, phosphate dikinase] + ADP = N(tele)-phospho-L-histidyl/O-phospho-L-threonyl-[pyruvate, phosphate dikinase] + AMP + H(+). It catalyses the reaction N(tele)-phospho-L-histidyl/O-phospho-L-threonyl-[pyruvate, phosphate dikinase] + phosphate + H(+) = N(tele)-phospho-L-histidyl/L-threonyl-[pyruvate, phosphate dikinase] + diphosphate. Its function is as follows. Bifunctional serine/threonine kinase and phosphorylase involved in the regulation of the pyruvate, phosphate dikinase (PPDK) by catalyzing its phosphorylation/dephosphorylation. The sequence is that of Putative pyruvate, phosphate dikinase regulatory protein from Lactobacillus gasseri (strain ATCC 33323 / DSM 20243 / BCRC 14619 / CIP 102991 / JCM 1131 / KCTC 3163 / NCIMB 11718 / NCTC 13722 / AM63).